A 505-amino-acid chain; its full sequence is AMP phosphorylase (505 aa).

AMP contacts are provided by residues Gly170, 196–201 (SRAITS), and Thr205. The active-site Proton donor is the Asp258. The AMP site is built by Ser266 and Lys290.

Belongs to the thymidine/pyrimidine-nucleoside phosphorylase family. Type 2 subfamily.

It carries out the reaction AMP + phosphate = alpha-D-ribose 1,5-bisphosphate + adenine. It catalyses the reaction CMP + phosphate = cytosine + alpha-D-ribose 1,5-bisphosphate. The enzyme catalyses UMP + phosphate = alpha-D-ribose 1,5-bisphosphate + uracil. In terms of biological role, catalyzes the conversion of AMP and phosphate to adenine and ribose 1,5-bisphosphate (R15P). Exhibits phosphorylase activity toward CMP and UMP in addition to AMP. Functions in an archaeal AMP degradation pathway, together with R15P isomerase and RubisCO. This chain is AMP phosphorylase, found in Methanococcus vannielii (strain ATCC 35089 / DSM 1224 / JCM 13029 / OCM 148 / SB).